The chain runs to 271 residues: uncharacterized protein (271 aa).

Disordered stretches follow at residues 50–93 (KKKT…SSSL) and 128–233 (KNNY…RKKV). Composition is skewed to low complexity over residues 61 to 93 (SPTK…SSSL) and 129 to 165 (NNYN…NNNN). The span at 169-179 (TDKKEGEKNEN) shows a compositional bias: basic and acidic residues. Acidic residues-rich tracts occupy residues 180-199 (ENEN…DIIE) and 207-217 (MDEELENEQVE).

This is an uncharacterized protein from Dictyostelium discoideum (Social amoeba).